The sequence spans 121 residues: Large ribosomal subunit protein uL18 (121 aa).

Basic residues predominate over residues 1-22 (MIKKPDKKTLRQGKHKRVRRKV). A disordered region spans residues 1-23 (MIKKPDKKTLRQGKHKRVRRKVA).

Belongs to the universal ribosomal protein uL18 family. Part of the 50S ribosomal subunit; part of the 5S rRNA/L5/L18/L25 subcomplex. Contacts the 5S and 23S rRNAs.

Functionally, this is one of the proteins that bind and probably mediate the attachment of the 5S RNA into the large ribosomal subunit, where it forms part of the central protuberance. This Syntrophomonas wolfei subsp. wolfei (strain DSM 2245B / Goettingen) protein is Large ribosomal subunit protein uL18.